Here is a 256-residue protein sequence, read N- to C-terminus: MNECIVIKCGGSMLERLDSTFFHCIEKLKRKYRIVIVHGGGPDIDKILKKLQIPIEKKHGLRVTSQEVMEVVQMVLCGSTNKNLVQNFQRYGLPAIGISGCDGKLLQAKPLNKKIGYVGEVSKVESSLLEGVLNLNYIPIIAPIGIGEEQVYNINADIAAAGIAAALRVKELIFITDVDGLLYEGKLVKKTDEIEILDMIEKEIITGGMIPKVQAALVALRMGIQSVSIVNGTKNFIGLTGEWIGTTVTRGRLQYE.

Residues 40–41 (GG), arginine 62, and asparagine 153 contribute to the substrate site.

The protein belongs to the acetylglutamate kinase family. ArgB subfamily.

The protein localises to the cytoplasm. The catalysed reaction is N-acetyl-L-glutamate + ATP = N-acetyl-L-glutamyl 5-phosphate + ADP. Its pathway is amino-acid biosynthesis; L-arginine biosynthesis; N(2)-acetyl-L-ornithine from L-glutamate: step 2/4. Catalyzes the ATP-dependent phosphorylation of N-acetyl-L-glutamate. This chain is Acetylglutamate kinase, found in Bacillus cytotoxicus (strain DSM 22905 / CIP 110041 / 391-98 / NVH 391-98).